A 436-amino-acid chain; its full sequence is ABC transporter permease YtrF (436 aa).

The first 31 residues, Met-1–Ala-31, serve as a signal peptide directing secretion. Cys-32 carries the N-palmitoyl cysteine lipid modification. Residue Cys-32 is the site of S-diacylglycerol cysteine attachment. A coiled-coil region spans residues Asn-115–Lys-165. 3 helical membrane passes run Phe-293 to Phe-313, Tyr-350 to Val-370, and Ile-396 to Gly-416.

It belongs to the ABC-4 integral membrane protein family. In terms of assembly, the complex is composed of 2 ATP-binding proteins (YtrB and YtrE), 2 transmembrane proteins (YtrC and YtrD) and a solute-binding protein (YtrF).

The protein resides in the cell membrane. In terms of biological role, part of the ABC transporter complex YtrBCDEF that plays a role in acetoin utilization during stationary phase and sporulation. The chain is ABC transporter permease YtrF (ytrF) from Bacillus subtilis (strain 168).